Here is a 196-residue protein sequence, read N- to C-terminus: ATP-dependent Clp protease proteolytic subunit (196 aa).

Ser101 serves as the catalytic Nucleophile. His126 is a catalytic residue.

Belongs to the peptidase S14 family. Component of the chloroplastic Clp protease core complex.

It is found in the plastid. It localises to the chloroplast stroma. It carries out the reaction Hydrolysis of proteins to small peptides in the presence of ATP and magnesium. alpha-casein is the usual test substrate. In the absence of ATP, only oligopeptides shorter than five residues are hydrolyzed (such as succinyl-Leu-Tyr-|-NHMec, and Leu-Tyr-Leu-|-Tyr-Trp, in which cleavage of the -Tyr-|-Leu- and -Tyr-|-Trp bonds also occurs).. In terms of biological role, cleaves peptides in various proteins in a process that requires ATP hydrolysis. Has a chymotrypsin-like activity. Plays a major role in the degradation of misfolded proteins. This chain is ATP-dependent Clp protease proteolytic subunit, found in Pinus thunbergii (Japanese black pine).